We begin with the raw amino-acid sequence, 224 residues long: Viral late gene transcription factor 3 (224 aa).

It belongs to the orthopoxvirus VLTF-3/OPG127 family. As to quaternary structure, interacts with the late transcription elongation factor VLTF-4/OPG110. Interacts with the late transcription factors VLTF-1/OPG093.

Its function is as follows. Acts with RNA polymerase to initiate transcription from late gene promoters. In Monkeypox virus, this protein is Viral late gene transcription factor 3 (OPG127).